We begin with the raw amino-acid sequence, 349 residues long: Fructose-1,6-bisphosphatase class 1 (349 aa).

Mg(2+) contacts are provided by glutamate 113, aspartate 135, isoleucine 137, and aspartate 138. Residues 138–141, asparagine 230, tyrosine 258, and lysine 288 contribute to the substrate site; that span reads DGSS. Mg(2+) is bound at residue glutamate 294.

This sequence belongs to the FBPase class 1 family. As to quaternary structure, homotetramer. It depends on Mg(2+) as a cofactor.

The protein resides in the cytoplasm. The enzyme catalyses beta-D-fructose 1,6-bisphosphate + H2O = beta-D-fructose 6-phosphate + phosphate. The protein operates within carbohydrate biosynthesis; Calvin cycle. This chain is Fructose-1,6-bisphosphatase class 1, found in Nostoc punctiforme (strain ATCC 29133 / PCC 73102).